The chain runs to 500 residues: Probable cytosol aminopeptidase (500 aa).

The Mn(2+) site is built by Lys269 and Asp274. Residue Lys281 is part of the active site. Residues Asp292, Asp351, and Glu353 each contribute to the Mn(2+) site. Arg355 is a catalytic residue.

It belongs to the peptidase M17 family. It depends on Mn(2+) as a cofactor.

The protein resides in the cytoplasm. The enzyme catalyses Release of an N-terminal amino acid, Xaa-|-Yaa-, in which Xaa is preferably Leu, but may be other amino acids including Pro although not Arg or Lys, and Yaa may be Pro. Amino acid amides and methyl esters are also readily hydrolyzed, but rates on arylamides are exceedingly low.. The catalysed reaction is Release of an N-terminal amino acid, preferentially leucine, but not glutamic or aspartic acids.. Functionally, presumably involved in the processing and regular turnover of intracellular proteins. Catalyzes the removal of unsubstituted N-terminal amino acids from various peptides. This chain is Probable cytosol aminopeptidase, found in Acidithiobacillus ferrooxidans (strain ATCC 23270 / DSM 14882 / CIP 104768 / NCIMB 8455) (Ferrobacillus ferrooxidans (strain ATCC 23270)).